The chain runs to 391 residues: Inhibin beta B chain (391 aa).

The signal sequence occupies residues 1–25 (MDGAARRGVLAALLACGLLLLGAAA). A propeptide spanning residues 26-276 (TPTPPPAGSS…ADNKHRIRKR (251 aa)) is cleaved from the precursor. The tract at residues 27 to 47 (PTPPPAGSSPQDTCTSCGFRR) is disordered. N-linked (GlcNAc...) asparagine glycosylation is present at asparagine 77. Disulfide bonds link cysteine 280-cysteine 288, cysteine 287-cysteine 356, cysteine 316-cysteine 388, and cysteine 320-cysteine 390.

The protein belongs to the TGF-beta family. Dimeric, linked by one or more disulfide bonds. Inhibin A is a dimer of alpha and beta-A. Inhibin B is a dimer of alpha and beta-B. Activin A is a homodimer of beta-A. Activin B is a homodimer of beta-B. Activin AB is a dimer of beta-A and beta-B.

The protein resides in the secreted. Functionally, inhibins and activins inhibit and activate, respectively, the secretion of follitropin by the pituitary gland. Inhibins/activins are involved in regulating a number of diverse functions such as hypothalamic and pituitary hormone secretion, gonadal hormone secretion, germ cell development and maturation, erythroid differentiation, insulin secretion, nerve cell survival, embryonic axial development or bone growth, depending on their subunit composition. Inhibins appear to oppose the functions of activins. This Gallus gallus (Chicken) protein is Inhibin beta B chain (INHBB).